The sequence spans 455 residues: MSFLIDSSIMVTSQILFFGFGWLFFMRQLFKDYEVRQYVVQVIFSVTFAFSCTMFELIIFEILGVLNSSSRYFHWKMNLCVILLILVFMVPFYIGYFIVSNIQLLHKQRLLFSCLLWLTFMYFFWKLGDPFPILSPKHGILSIEQLISRVGVIGVTLMALLSGFGAVNCPYTYMSYFLRNVTDTDILALERRLLQTMDMIISKKKRMAVARRTMFQRGEVQNKPSGLWGMLKSVTASAPGSENLTLIQQEVDALEELSRQLFLETADLYATKERIEYSKTFKGKYFNFLGYFFSIYCVWKIFMATINIVLDRVGKTDPVTRGIEITVNYLGIQFDVKFWSQHISFILVGIIIVSSIRGLLITLTKFFYAISSSKSSNVIVLLLAQIMGMYFVSSVLLIRMSMPPEYRTIITQVLGELQFNFYHRWFDVIFLVSALSSILFLYLAHKQAPEKHMAP.

5 helical membrane passes run 5-25 (IDSS…WLFF), 46-66 (VTFA…LGVL), 79-99 (LCVI…YFIV), 114-134 (CLLW…FPIL), and 150-170 (VGVI…VNCP). N-linked (GlcNAc...) asparagine glycans are attached at residues N180 and N243. The next 4 helical transmembrane spans lie at 290-310 (GYFF…NIVL), 343-363 (ISFI…LITL), 378-398 (VIVL…VLLI), and 425-445 (WFDV…YLAH).

It belongs to the Golgi pH regulator (TC 1.A.38) family. Homotrimer. Interacts with RABL3; the interaction stabilizes GPR89B.

It is found in the golgi apparatus membrane. The enzyme catalyses iodide(out) = iodide(in). It carries out the reaction chloride(in) = chloride(out). It catalyses the reaction bromide(in) = bromide(out). The catalysed reaction is fluoride(in) = fluoride(out). In terms of biological role, voltage-gated channel that enables the transfer of anions such as iodide, chloride, bromide and fluoride which may function in counter-ion conductance and participates in Golgi acidification. Plays a role in lymphocyte development, probably by acting as a RABL3 effector in hematopoietic cells. In Cricetulus griseus (Chinese hamster), this protein is Golgi pH regulator.